A 218-amino-acid polypeptide reads, in one-letter code: Ribonuclease HII (218 aa).

The RNase H type-2 domain maps to aspartate 13–threonine 202. 3 residues coordinate a divalent metal cation: aspartate 19, glutamate 20, and aspartate 111.

This sequence belongs to the RNase HII family. Mn(2+) serves as cofactor. Requires Mg(2+) as cofactor.

The protein localises to the cytoplasm. The enzyme catalyses Endonucleolytic cleavage to 5'-phosphomonoester.. Endonuclease that specifically degrades the RNA of RNA-DNA hybrids. This chain is Ribonuclease HII, found in Pseudomonas syringae pv. syringae (strain B728a).